Consider the following 186-residue polypeptide: Elongation factor P (186 aa).

The protein belongs to the elongation factor P family.

It is found in the cytoplasm. It participates in protein biosynthesis; polypeptide chain elongation. Functionally, involved in peptide bond synthesis. Stimulates efficient translation and peptide-bond synthesis on native or reconstituted 70S ribosomes in vitro. Probably functions indirectly by altering the affinity of the ribosome for aminoacyl-tRNA, thus increasing their reactivity as acceptors for peptidyl transferase. This Coprothermobacter proteolyticus (strain ATCC 35245 / DSM 5265 / OCM 4 / BT) protein is Elongation factor P.